A 212-amino-acid chain; its full sequence is Thiamine-phosphate synthase (212 aa).

4-amino-2-methyl-5-(diphosphooxymethyl)pyrimidine contacts are provided by residues 40–44 and asparagine 75; that span reads QFREK. Positions 76 and 95 each coordinate Mg(2+). Residue serine 113 coordinates 4-amino-2-methyl-5-(diphosphooxymethyl)pyrimidine. 139 to 141 serves as a coordination point for 2-[(2R,5Z)-2-carboxy-4-methylthiazol-5(2H)-ylidene]ethyl phosphate; sequence TTS. Lysine 142 contacts 4-amino-2-methyl-5-(diphosphooxymethyl)pyrimidine. Residues glycine 171 and 191-192 each bind 2-[(2R,5Z)-2-carboxy-4-methylthiazol-5(2H)-ylidene]ethyl phosphate; that span reads IS.

It belongs to the thiamine-phosphate synthase family. Mg(2+) serves as cofactor.

The catalysed reaction is 2-[(2R,5Z)-2-carboxy-4-methylthiazol-5(2H)-ylidene]ethyl phosphate + 4-amino-2-methyl-5-(diphosphooxymethyl)pyrimidine + 2 H(+) = thiamine phosphate + CO2 + diphosphate. It carries out the reaction 2-(2-carboxy-4-methylthiazol-5-yl)ethyl phosphate + 4-amino-2-methyl-5-(diphosphooxymethyl)pyrimidine + 2 H(+) = thiamine phosphate + CO2 + diphosphate. The enzyme catalyses 4-methyl-5-(2-phosphooxyethyl)-thiazole + 4-amino-2-methyl-5-(diphosphooxymethyl)pyrimidine + H(+) = thiamine phosphate + diphosphate. Its pathway is cofactor biosynthesis; thiamine diphosphate biosynthesis; thiamine phosphate from 4-amino-2-methyl-5-diphosphomethylpyrimidine and 4-methyl-5-(2-phosphoethyl)-thiazole: step 1/1. Functionally, condenses 4-methyl-5-(beta-hydroxyethyl)thiazole monophosphate (THZ-P) and 2-methyl-4-amino-5-hydroxymethyl pyrimidine pyrophosphate (HMP-PP) to form thiamine monophosphate (TMP). This chain is Thiamine-phosphate synthase, found in Staphylococcus saprophyticus subsp. saprophyticus (strain ATCC 15305 / DSM 20229 / NCIMB 8711 / NCTC 7292 / S-41).